The primary structure comprises 251 residues: 3-deoxy-manno-octulosonate cytidylyltransferase (251 aa).

The protein belongs to the KdsB family.

It is found in the cytoplasm. It carries out the reaction 3-deoxy-alpha-D-manno-oct-2-ulosonate + CTP = CMP-3-deoxy-beta-D-manno-octulosonate + diphosphate. It functions in the pathway nucleotide-sugar biosynthesis; CMP-3-deoxy-D-manno-octulosonate biosynthesis; CMP-3-deoxy-D-manno-octulosonate from 3-deoxy-D-manno-octulosonate and CTP: step 1/1. The protein operates within bacterial outer membrane biogenesis; lipopolysaccharide biosynthesis. Activates KDO (a required 8-carbon sugar) for incorporation into bacterial lipopolysaccharide in Gram-negative bacteria. The polypeptide is 3-deoxy-manno-octulosonate cytidylyltransferase (Vibrio vulnificus (strain YJ016)).